Reading from the N-terminus, the 1385-residue chain is DNA-directed RNA polymerase subunit beta'' (1385 aa).

4 residues coordinate Zn(2+): Cys224, Cys294, Cys301, and Cys304.

The protein belongs to the RNA polymerase beta' chain family. RpoC2 subfamily. As to quaternary structure, in plastids the minimal PEP RNA polymerase catalytic core is composed of four subunits: alpha, beta, beta', and beta''. When a (nuclear-encoded) sigma factor is associated with the core the holoenzyme is formed, which can initiate transcription. Zn(2+) serves as cofactor.

The protein resides in the plastid. Its subcellular location is the chloroplast. It catalyses the reaction RNA(n) + a ribonucleoside 5'-triphosphate = RNA(n+1) + diphosphate. DNA-dependent RNA polymerase catalyzes the transcription of DNA into RNA using the four ribonucleoside triphosphates as substrates. This Illicium oligandrum (Star anise) protein is DNA-directed RNA polymerase subunit beta''.